Consider the following 745-residue polypeptide: Elongation factor G, mitochondrial (745 aa).

The 278-residue stretch at 40–317 (ERIRNIGISA…AVLDYLPNPG (278 aa)) folds into the tr-type G domain. GTP-binding positions include 49-56 (AHIDSGKT), 116-120 (DTPGH), and 170-173 (NKLD).

It belongs to the TRAFAC class translation factor GTPase superfamily. Classic translation factor GTPase family. EF-G/EF-2 subfamily.

The protein localises to the mitochondrion. The protein operates within protein biosynthesis; polypeptide chain elongation. Its function is as follows. Mitochondrial GTPase that catalyzes the GTP-dependent ribosomal translocation step during translation elongation. During this step, the ribosome changes from the pre-translocational (PRE) to the post-translocational (POST) state as the newly formed A-site-bound peptidyl-tRNA and P-site-bound deacylated tRNA move to the P and E sites, respectively. Catalyzes the coordinated movement of the two tRNA molecules, the mRNA and conformational changes in the ribosome. Essential during development as it acts as a retrograde signal from mitochondria to the nucleus to slow down cell proliferation if mitochondrial energy output is low. This chain is Elongation factor G, mitochondrial, found in Drosophila melanogaster (Fruit fly).